Reading from the N-terminus, the 471-residue chain is Regulator of microtubule dynamics protein 3 (471 aa).

The Mitochondrial intermembrane portion of the chain corresponds to 1–9 (MSSLGTLGG). Residues 10–32 (ARAGLGLLLGTAAGLGFLCALYS) traverse the membrane as a helical segment. Topologically, residues 33–471 (QRWKRTQRRG…LEELEVILGE (439 aa)) are cytoplasmic. Residues 39–70 (QRRGQSQSQSNSLDYTQTSEPGRQVRPLRAAP) are disordered. The span at 41-50 (RGQSQSQSNS) shows a compositional bias: low complexity. Residues Ser44, Ser46, Ser50, and Ser57 each carry the phosphoserine modification. A coiled-coil region spans residues 90–123 (LDRLEFVLTSLVALRREVEELRSSLQGLAGQIVG). An FFAT motif is present at residues 156 to 162 (VYFTAAS). Position 159 is a phosphothreonine (Thr159). The segment at 169-206 (AESEGGYTTANAESDYERDSERESDGDGEDEVSCETVK) is disordered. Phosphoserine occurs at positions 182, 192, 212, and 233. Residues 183–193 (DYERDSERESD) show a composition bias toward basic and acidic residues.

Belongs to the RMDN family. In terms of assembly, interacts with PTPN2. Interacts with microtubules. Interacts with VAPB. Interacts (via FFAT motif) with MOSPD2 (via MSP domain). Interacts (via phosphorylated FFAT motif) with MOSPD2, VAPA and VAPB. Phosphorylation at Thr-160 of the FFAT motif activates interaction with MOSPD2, VAPA and VAPB.

The protein resides in the mitochondrion outer membrane. It is found in the cytoplasm. It localises to the nucleus. Its subcellular location is the cytoskeleton. The protein localises to the spindle. The protein resides in the spindle pole. In terms of biological role, involved in cellular calcium homeostasis regulation. May participate in differentiation and apoptosis of keratinocytes. Overexpression induces apoptosis. This is Regulator of microtubule dynamics protein 3 from Bos taurus (Bovine).